We begin with the raw amino-acid sequence, 701 residues long: Elongation factor G 1 (701 aa).

The tr-type G domain occupies 5–281 (SKYRNIGIFA…AVVDYLPSPT (277 aa)). Residues 14-21 (AHVDAGKT), 78-82 (DTPGH), and 132-135 (NKLD) each bind GTP.

This sequence belongs to the TRAFAC class translation factor GTPase superfamily. Classic translation factor GTPase family. EF-G/EF-2 subfamily.

The protein resides in the cytoplasm. Functionally, catalyzes the GTP-dependent ribosomal translocation step during translation elongation. During this step, the ribosome changes from the pre-translocational (PRE) to the post-translocational (POST) state as the newly formed A-site-bound peptidyl-tRNA and P-site-bound deacylated tRNA move to the P and E sites, respectively. Catalyzes the coordinated movement of the two tRNA molecules, the mRNA and conformational changes in the ribosome. This chain is Elongation factor G 1, found in Colwellia psychrerythraea (strain 34H / ATCC BAA-681) (Vibrio psychroerythus).